Here is a 963-residue protein sequence, read N- to C-terminus: SH3 domain-binding protein 4 (963 aa).

One can recognise an SH3 1 domain in the interval 55–114; it reads GNAKEVIAIKDYCPTNFTTLKFSKGDHLYVLDTSGGEWWYAHNTTEMGYIPSSYVQPLNY. Residues Ser131, Ser246, Ser251, Ser279, and Ser296 each carry the phosphoserine modification. Residues 317 to 454 enclose the ZU5 domain; sequence TNIVCKLDSS…LEPCMYVAVV (138 aa). Position 637 is a phosphoserine (Ser637). The region spanning 654 to 724 is the SH3 2 domain; sequence SSLKFGKLLK…HTKNVLVVGR (71 aa).

In terms of assembly, homodimer or homooligomer. Interacts with DNM2, EPS15, clathrin, the adapter protein complex 2/AP-2 and TFRC. Interacts with the Rag GTPases RRAGA, RRAGB, RRAGC and RRAGD; the interaction is most probably direct, preferentially occurs with their inactive GDP-bound form and is negatively regulated by amino acids. As to quaternary structure, (Microbial infection) Interacts with molluscum contagiosum virus protein MC159L; this interaction is important for the suppression of autophagy. Post-translationally, phosphorylated upon EGF stimulation. Phosphorylation prevents interaction with DNM2. As to expression, expressed in all tissues tested with higher expression in pancreas. Expressed by retinal pigment epithelial cells (at protein level).

Its subcellular location is the membrane. The protein resides in the clathrin-coated pit. The protein localises to the cytoplasmic vesicle. It localises to the clathrin-coated vesicle. It is found in the nucleus. Its function is as follows. May function in transferrin receptor internalization at the plasma membrane through a cargo-specific control of clathrin-mediated endocytosis. Alternatively, may act as a negative regulator of the amino acid-induced TOR signaling by inhibiting the formation of active Rag GTPase complexes. Preferentially binds inactive Rag GTPase complexes and prevents their interaction with the mTORC1 complex inhibiting its relocalization to lysosomes and its activation. Thereby, may indirectly regulate cell growth, proliferation and autophagy. This chain is SH3 domain-binding protein 4 (SH3BP4), found in Homo sapiens (Human).